Consider the following 145-residue polypeptide: MNKNNVLRGLLVLAGLSLSSLALAHGDVTPQAVDTKGLEPLGKEWRDTNPYRKPYAKHDLAVEIGASAYNQNCARCHGLEAKSGGIAPDLRLLETGAEGDEWFKERVINGAVRDGAVYMPKMADFISQEGLWAIRSYLESVHVDE.

The N-terminal stretch at 1-24 (MNKNNVLRGLLVLAGLSLSSLALA) is a signal peptide. The Cytochrome c domain occupies 60–142 (LAVEIGASAY…AIRSYLESVH (83 aa)). Positions 73, 76, 77, and 119 each coordinate heme c.

Monomer. Interacts with the quinoprotein ethanol dehydrogenase (QEDH) ExaA. In terms of processing, binds 1 heme group per subunit.

It localises to the periplasm. It participates in alcohol metabolism; ethanol degradation; acetate from ethanol. Functionally, is an essential component of the ethanol oxidation system that allows P.aeruginosa to grow on ethanol as the sole carbon and energy source. Is the direct electron acceptor of the quinoprotein ethanol dehydrogenase (QEDH). The sequence is that of Cytochrome c550 from Pseudomonas aeruginosa (strain ATCC 15692 / DSM 22644 / CIP 104116 / JCM 14847 / LMG 12228 / 1C / PRS 101 / PAO1).